The chain runs to 307 residues: Small ribosomal subunit biogenesis GTPase RsgA (307 aa).

A CP-type G domain is found at 80 to 237 (KADLRQTIVS…IVDTPGIKEF (158 aa)). GTP is bound by residues 129–132 (NKID) and 180–188 (GQSGVGKSS). 4 residues coordinate Zn(2+): Cys261, Cys266, His268, and Cys274.

Belongs to the TRAFAC class YlqF/YawG GTPase family. RsgA subfamily. In terms of assembly, monomer. Associates with 30S ribosomal subunit, binds 16S rRNA. Zn(2+) is required as a cofactor.

Its subcellular location is the cytoplasm. In terms of biological role, one of several proteins that assist in the late maturation steps of the functional core of the 30S ribosomal subunit. Helps release RbfA from mature subunits. May play a role in the assembly of ribosomal proteins into the subunit. Circularly permuted GTPase that catalyzes slow GTP hydrolysis, GTPase activity is stimulated by the 30S ribosomal subunit. In Borreliella afzelii (strain PKo) (Borrelia afzelii), this protein is Small ribosomal subunit biogenesis GTPase RsgA.